A 315-amino-acid polypeptide reads, in one-letter code: Methionyl-tRNA formyltransferase (315 aa).

Position 111–114 (111–114) interacts with (6S)-5,6,7,8-tetrahydrofolate; sequence SLLP.

Belongs to the Fmt family.

It catalyses the reaction L-methionyl-tRNA(fMet) + (6R)-10-formyltetrahydrofolate = N-formyl-L-methionyl-tRNA(fMet) + (6S)-5,6,7,8-tetrahydrofolate + H(+). Its function is as follows. Attaches a formyl group to the free amino group of methionyl-tRNA(fMet). The formyl group appears to play a dual role in the initiator identity of N-formylmethionyl-tRNA by promoting its recognition by IF2 and preventing the misappropriation of this tRNA by the elongation apparatus. This is Methionyl-tRNA formyltransferase from Chlorobium phaeobacteroides (strain DSM 266 / SMG 266 / 2430).